The following is a 108-amino-acid chain: Urease subunit beta (108 aa).

Belongs to the urease beta subunit family. As to quaternary structure, heterotrimer of UreA (gamma), UreB (beta) and UreC (alpha) subunits. Three heterotrimers associate to form the active enzyme.

The protein localises to the cytoplasm. The catalysed reaction is urea + 2 H2O + H(+) = hydrogencarbonate + 2 NH4(+). It functions in the pathway nitrogen metabolism; urea degradation; CO(2) and NH(3) from urea (urease route): step 1/1. The chain is Urease subunit beta from Microcystis aeruginosa (strain NIES-843 / IAM M-2473).